A 180-amino-acid polypeptide reads, in one-letter code: Immediate early response gene 2 protein (180 aa).

The interval 53 to 135 is disordered; that stretch reads MSEKSGQSVT…KRRSKTATDS (83 aa). Polar residues predominate over residues 56 to 92; sequence KSGQSVTEECTSHTQEPMDTSSSTATPLRETSGQSSE. The span at 93–103 shows a compositional bias: basic and acidic residues; the sequence is DGQRSGLEGHP.

The protein belongs to the IER family. As to quaternary structure, interacts with FIBPB.

Its subcellular location is the nucleus. The protein resides in the cytoplasm. DNA-binding protein that seems to act as a transcription factor. Mediates with FIBPB FGF-signaling in Kupffer's vesicle ciliogenesis and in the establishment of laterality in the embryo. This Danio rerio (Zebrafish) protein is Immediate early response gene 2 protein.